Consider the following 243-residue polypeptide: Urease accessory protein UreF (243 aa).

Belongs to the UreF family. UreD, UreF and UreG form a complex that acts as a GTP-hydrolysis-dependent molecular chaperone, activating the urease apoprotein by helping to assemble the nickel containing metallocenter of UreC. The UreE protein probably delivers the nickel.

Its subcellular location is the cytoplasm. Functionally, required for maturation of urease via the functional incorporation of the urease nickel metallocenter. In Rhodopseudomonas palustris (strain BisB5), this protein is Urease accessory protein UreF.